Reading from the N-terminus, the 668-residue chain is tRNA 5-methylaminomethyl-2-thiouridine biosynthesis bifunctional protein MnmC (668 aa).

The tract at residues 1–245 (MKHYSIQPAN…KREMLCGVME (245 aa)) is tRNA (mnm(5)s(2)U34)-methyltransferase. Residues 270-668 (IGGGIASALL…LLKGKAVKAG (399 aa)) are FAD-dependent cmnm(5)s(2)U34 oxidoreductase.

This sequence in the N-terminal section; belongs to the methyltransferase superfamily. tRNA (mnm(5)s(2)U34)-methyltransferase family. It in the C-terminal section; belongs to the DAO family. The cofactor is FAD.

The protein localises to the cytoplasm. The catalysed reaction is 5-aminomethyl-2-thiouridine(34) in tRNA + S-adenosyl-L-methionine = 5-methylaminomethyl-2-thiouridine(34) in tRNA + S-adenosyl-L-homocysteine + H(+). In terms of biological role, catalyzes the last two steps in the biosynthesis of 5-methylaminomethyl-2-thiouridine (mnm(5)s(2)U) at the wobble position (U34) in tRNA. Catalyzes the FAD-dependent demodification of cmnm(5)s(2)U34 to nm(5)s(2)U34, followed by the transfer of a methyl group from S-adenosyl-L-methionine to nm(5)s(2)U34, to form mnm(5)s(2)U34. This chain is tRNA 5-methylaminomethyl-2-thiouridine biosynthesis bifunctional protein MnmC, found in Shigella flexneri serotype 5b (strain 8401).